Consider the following 949-residue polypeptide: Glycine dehydrogenase (decarboxylating) (949 aa).

Lys-699 carries the N6-(pyridoxal phosphate)lysine modification.

The protein belongs to the GcvP family. As to quaternary structure, the glycine cleavage system is composed of four proteins: P, T, L and H. Requires pyridoxal 5'-phosphate as cofactor.

It catalyses the reaction N(6)-[(R)-lipoyl]-L-lysyl-[glycine-cleavage complex H protein] + glycine + H(+) = N(6)-[(R)-S(8)-aminomethyldihydrolipoyl]-L-lysyl-[glycine-cleavage complex H protein] + CO2. Functionally, the glycine cleavage system catalyzes the degradation of glycine. The P protein binds the alpha-amino group of glycine through its pyridoxal phosphate cofactor; CO(2) is released and the remaining methylamine moiety is then transferred to the lipoamide cofactor of the H protein. This chain is Glycine dehydrogenase (decarboxylating), found in Roseobacter denitrificans (strain ATCC 33942 / OCh 114) (Erythrobacter sp. (strain OCh 114)).